A 453-amino-acid polypeptide reads, in one-letter code: MFAIAILAAGKGTRMRSSYPKVLQQLAGRSLIKRVIKSCEDLKPDRFLVIVGHQAEAVQDHLKELSHLEYINQVPQKGTGHAIQQLLPVLDNFIGDLLVLNGDVPLLKAETLQKLIAKHKTSKASVTFLSARLSNPKGYGRVFSNNQDEVDRIVEDADCSREEKSNKLTNAGIYLFKWDLLKNILPKLSSTNKQSELYLTDAISQLPTAIHLEVDNIDEVSGVNDRAQLANCENLIQQSLRNHWMSKGVSFIDPESCTISEESQFGIDIVIEPQTHLRGNCFIGNNCRLGPSTYIEDSRLGENVNVMQSTLNNCQVASHVKIGPFAHLRPETNVSSNCRIGNFVEIKKSELGQGTKVNHLSYIGDSHVGCHVNIGAGTITANFDGFRKNETVIGDHTKTGANSVLIAPINIGNRVTVGAGSTLTKNVPDGSLAIERSKQNIKENWKTREETNQ.

A pyrophosphorylase region spans residues 1–226 (MFAIAILAAG…IDEVSGVNDR (226 aa)). UDP-N-acetyl-alpha-D-glucosamine-binding positions include 7-10 (LAAG), Lys-21, Gln-73, and 78-79 (GT). Asp-103 is a Mg(2+) binding site. UDP-N-acetyl-alpha-D-glucosamine contacts are provided by Gly-140, Glu-155, Asn-170, and Asn-224. Asn-224 serves as a coordination point for Mg(2+). The segment at 227-247 (AQLANCENLIQQSLRNHWMSK) is linker. The N-acetyltransferase stretch occupies residues 248-453 (GVSFIDPESC…NWKTREETNQ (206 aa)). UDP-N-acetyl-alpha-D-glucosamine is bound by residues Arg-329 and Lys-347. His-359 acts as the Proton acceptor in catalysis. UDP-N-acetyl-alpha-D-glucosamine-binding residues include Tyr-362 and Asn-373. Acetyl-CoA contacts are provided by Ala-376, Ala-419, and Arg-436.

In the N-terminal section; belongs to the N-acetylglucosamine-1-phosphate uridyltransferase family. The protein in the C-terminal section; belongs to the transferase hexapeptide repeat family. In terms of assembly, homotrimer. It depends on Mg(2+) as a cofactor.

The protein localises to the cytoplasm. The enzyme catalyses alpha-D-glucosamine 1-phosphate + acetyl-CoA = N-acetyl-alpha-D-glucosamine 1-phosphate + CoA + H(+). It catalyses the reaction N-acetyl-alpha-D-glucosamine 1-phosphate + UTP + H(+) = UDP-N-acetyl-alpha-D-glucosamine + diphosphate. It functions in the pathway nucleotide-sugar biosynthesis; UDP-N-acetyl-alpha-D-glucosamine biosynthesis; N-acetyl-alpha-D-glucosamine 1-phosphate from alpha-D-glucosamine 6-phosphate (route II): step 2/2. It participates in nucleotide-sugar biosynthesis; UDP-N-acetyl-alpha-D-glucosamine biosynthesis; UDP-N-acetyl-alpha-D-glucosamine from N-acetyl-alpha-D-glucosamine 1-phosphate: step 1/1. Its pathway is bacterial outer membrane biogenesis; LPS lipid A biosynthesis. Catalyzes the last two sequential reactions in the de novo biosynthetic pathway for UDP-N-acetylglucosamine (UDP-GlcNAc). The C-terminal domain catalyzes the transfer of acetyl group from acetyl coenzyme A to glucosamine-1-phosphate (GlcN-1-P) to produce N-acetylglucosamine-1-phosphate (GlcNAc-1-P), which is converted into UDP-GlcNAc by the transfer of uridine 5-monophosphate (from uridine 5-triphosphate), a reaction catalyzed by the N-terminal domain. The chain is Bifunctional protein GlmU from Prochlorococcus marinus (strain MIT 9211).